The following is a 66-amino-acid chain: Omega conotoxin-CVIE (66 aa).

The first 17 residues, 1–17 (VVIVAVLLLTACQLITA), serve as a signal peptide directing secretion. Residues 18-40 (NDSRGTQKHRALRSDTKLSMSTR) constitute a propeptide that is removed on maturation. Disulfide bonds link cysteine 41–cysteine 56, cysteine 48–cysteine 60, and cysteine 55–cysteine 65. At cysteine 65 the chain carries Cysteine amide.

It belongs to the conotoxin O1 superfamily. As to expression, expressed by the venom duct.

The protein localises to the secreted. Its function is as follows. Omega-conotoxins act at presynaptic membranes, they bind and block voltage-gated calcium channels. This toxin blocks N-type calcium channels (Cav2.2/CACNA1B). It shows a higher potency when Cav2.2/CACNA1B is only expressed with the ancillary subunit CACNB3 (IC(50)=0.12 nM) than on Cav2.2/CACNA1B expressed with the ancillary subunits CACNA2D1 and CACNB3 (IC(50)=2.6 nM). The Cav2.2/CACNA1B block by this toxin is voltage-independent, whereas the recovery from toxin block is voltage-dependent. There is a low recovery at physiological membrane potential and a high recovery with hyperpolarized potential. This indicates that the toxin has a higher affinity for Cav2.2/CACNA1B in the inactivated state. It is noteworthy that ancillary subunits beta modulate recovery from this toxin block. Cav2.2/CACNA1B expressed with the ancillary subunit CACNB2a (isoform 2a) almost recover completely from this toxin block, whereas Cav2.2/CACNA1B expressed with CACNB3 exhibits relatively weak recovery. Inhibition by this toxin of excitatory synaptic transmission is reversible. In vivo, when tested on rat model of persistent pain, this toxin blocks chronic pain behavior. This Conus catus (Cat cone) protein is Omega conotoxin-CVIE.